A 1046-amino-acid chain; its full sequence is MSAVTTDEIWPLKVLLDTLRSLSSRTSPTEPWGATATAEARAAIGSFFLASGTMSILQVELTWRDTFSAILEVYKQTRSPEASMLAQNFVGLILWRISVRWDKTSWQENSHRLRRLVAEMTGEEAISWLSRNNLRISAPFGPSVMWPLISEWFAVFEDAANHAFTYTPEHLLSEREFSFNVGDLAASLAHKRFELIYDFPFVQEGIRLVSIASGWIAPFVIMYRCTTNRVFTPLTRILFTIALVDQYFRGLHAPQPFQIKDRFAEDVGALGSKELIPALEANSTKRTSYEVRASAAIAYESPFVHTIQPGMAADKLRNGSDIIMSDTSLTEDSLAIHLSAVLRLISDIGLEEDNGAIDAAKAKLSNSARRAWDAIQYSSSPKQLLEALIERGFVRQVCRAYESALKTYFTRNYGSVDEGDIFDDVQQVVGCVAVIGNVVFGLIESYGPGMTYLSNYMENCVISESDSHFIEALGLERAIISQIIGRCIPPIPHEDYIKAARAVLVAEMDHVASKSEAVGFRQSIRSAKESLMLWFDNRANEIWGIVPPDESNVLNLDANLPNSDYSNVDSNVEQDEFDGERESEMIRLASTIRYPEPMPITPESTTPHFLKYIIATVCLDALTSVTTAIFSTPRLGTALKVLTWARDYGMPYLDSFINHRGKLNALISAIIPFTQDISNAPTTDDALNIEMLLGELYDVISVAISMLPQEARPFLPPRPDPSNSNVLISMHGTALHLQLNYLAERTFDCVEHLSNKSKQLVVFASIFKDFFTCKFVSGISGGTVKLYHHSELHSSLGTWKIFDVMTAIRELYDSANNIIADIRLDSMKLRTIIEETGKQLLLCDDIMEQANALGQDAVKLFSVLGADFAGLTRLQNSLDLHIRKLTSCNTPPGMQDICWLLGRWSILSEINSTYRDRSSHELVSAIENVGGVLQDMMDHDLASIGTDDKSVAGEIEFAVESVMRDYPVITEDDTTLVVTLSSRHNLTHRDEINFCTLDIETIAPDDVDLTSFARDFITKQRVTADALVNIIDTVFNTGRRANGDNA.

The interaction with large tegument protein stretch occupies residues 543–1046 (WGIVPPDESN…TGRRANGDNA (504 aa)).

Belongs to the herpesviridae inner tegument protein family. As to quaternary structure, interacts (via C-terminus) with the large tegument protein/LTP (via N-terminus).

It is found in the virion tegument. The protein localises to the host cytoplasm. The protein resides in the host nucleus. Its subcellular location is the host Golgi apparatus. It localises to the host trans-Golgi network. Functionally, plays an essential role in cytoplasmic secondary envelopment during viral egress. Interacts with the capsid via the large tegument protein/LTP and participates in its transport to the host trans-Golgi network (TGN) where secondary envelopment occurs. Modulates tegumentation and capsid accumulation at the viral assembly complex. This is Inner tegument protein (MDV050) from Gallid herpesvirus 2 (strain Chicken/Md5/ATCC VR-987) (GaHV-2).